Here is a 709-residue protein sequence, read N- to C-terminus: Disintegrin and metalloproteinase domain-containing protein 5 (709 aa).

Positions Met1 to Tyr98 are excised as a propeptide. The Extracellular segment spans residues Met1 to Gln649. Residues Arg141–Pro334 enclose the Peptidase M12B domain. Intrachain disulfides connect Cys247-Cys329, Cys289-Cys314, Cys291-Cys296, Cys406-Cys426, Cys585-Cys597, Cys591-Cys603, and Cys605-Cys614. Positions Arg346–Asn434 constitute a Disintegrin domain. The EGF-like; calcium-binding domain maps to Asp581–Glu615. A helical membrane pass occupies residues Gln650–Ile670. Topologically, residues Lys671–His709 are cytoplasmic. The tract at residues Ile690–His709 is disordered.

As to quaternary structure, interacts with TEX101. In terms of tissue distribution, detected in testis.

The protein resides in the membrane. In terms of biological role, this is a non catalytic metalloprotease-like protein. May play a role in sperm-egg fusion. The protein is Disintegrin and metalloproteinase domain-containing protein 5 (Adam5) of Rattus norvegicus (Rat).